Consider the following 479-residue polypeptide: Ribosomal RNA small subunit methyltransferase F (479 aa).

Residues 125–131 (AAAPGSK), Glu149, Asp176, and Asp194 contribute to the S-adenosyl-L-methionine site. Cys247 functions as the Nucleophile in the catalytic mechanism.

This sequence belongs to the class I-like SAM-binding methyltransferase superfamily. RsmB/NOP family.

It localises to the cytoplasm. It catalyses the reaction cytidine(1407) in 16S rRNA + S-adenosyl-L-methionine = 5-methylcytidine(1407) in 16S rRNA + S-adenosyl-L-homocysteine + H(+). In terms of biological role, specifically methylates the cytosine at position 1407 (m5C1407) of 16S rRNA. This is Ribosomal RNA small subunit methyltransferase F from Escherichia coli O139:H28 (strain E24377A / ETEC).